The chain runs to 545 residues: Prolyl 3-hydroxylase OGFOD1 (545 aa).

The disordered stretch occupies residues 1–23 (MNGKRPADPGPARPMKKGKKQVS). Residues 137–239 (PTIDMSCAKY…RLSISGWFYG (103 aa)) enclose the Fe2OG dioxygenase domain. The Fe cation site is built by His-155 and Asp-157. Position 169 (Tyr-169) interacts with 2-oxoglutarate. Residue His-218 participates in Fe cation binding. Arg-230 contributes to the 2-oxoglutarate binding site. The segment covering 371-380 (SEDDETEEKG) has biased composition (acidic residues). The tract at residues 371–437 (SEDDETEEKG…EAKKESSVPM (67 aa)) is disordered. The span at 383 to 393 (ETASAAAGTEE) shows a compositional bias: low complexity. Over residues 402–417 (PENNQVAAGSHSQENG) the composition is skewed to polar residues.

Belongs to the TPA1 family. In terms of assembly, monomer. The cofactor is Fe(2+). It depends on L-ascorbate as a cofactor.

The protein resides in the cytoplasm. Its subcellular location is the nucleus. The catalysed reaction is [ribosomal protein uS12]-L-proline + 2-oxoglutarate + O2 = [ribosomal protein uS12]-(3S)-3-hydroxy-L-proline + succinate + CO2. In terms of biological role, prolyl 3-hydroxylase that catalyzes 3-hydroxylation of 'Pro-62' of small ribosomal subunit uS12 (RPS23), thereby regulating protein translation termination efficiency. Involved in stress granule formation. This is Prolyl 3-hydroxylase OGFOD1 (Ogfod1) from Mus musculus (Mouse).